The chain runs to 207 residues: Large ribosomal subunit protein uL4 (207 aa).

It belongs to the universal ribosomal protein uL4 family. In terms of assembly, part of the 50S ribosomal subunit.

Its function is as follows. One of the primary rRNA binding proteins, this protein initially binds near the 5'-end of the 23S rRNA. It is important during the early stages of 50S assembly. It makes multiple contacts with different domains of the 23S rRNA in the assembled 50S subunit and ribosome. Forms part of the polypeptide exit tunnel. The protein is Large ribosomal subunit protein uL4 of Rickettsia rickettsii (strain Iowa).